Consider the following 282-residue polypeptide: 2-dehydro-3-deoxyphosphooctonate aldolase (282 aa).

This sequence belongs to the KdsA family.

It is found in the cytoplasm. It carries out the reaction D-arabinose 5-phosphate + phosphoenolpyruvate + H2O = 3-deoxy-alpha-D-manno-2-octulosonate-8-phosphate + phosphate. The protein operates within carbohydrate biosynthesis; 3-deoxy-D-manno-octulosonate biosynthesis; 3-deoxy-D-manno-octulosonate from D-ribulose 5-phosphate: step 2/3. It functions in the pathway bacterial outer membrane biogenesis; lipopolysaccharide biosynthesis. The chain is 2-dehydro-3-deoxyphosphooctonate aldolase from Shewanella baltica (strain OS185).